We begin with the raw amino-acid sequence, 431 residues long: Protein CLT2, chloroplastic (431 aa).

The transit peptide at M1 to G79 directs the protein to the chloroplast. 10 helical membrane-spanning segments follow: residues V99 to M119, Y122 to L142, F163 to M183, V188 to L208, F212 to S232, I244 to I264, I284 to P304, I343 to V363, I365 to I385, and F403 to P423.

It belongs to the CRT-like transporter family.

Its subcellular location is the plastid. It is found in the chloroplast membrane. Its function is as follows. Involved in thiol transport from the plastid to the cytosol. Transports probably both glutathione (GSH) and its precursor, gamma-glutamylcysteine (gamma-EC). The sequence is that of Protein CLT2, chloroplastic from Arabidopsis thaliana (Mouse-ear cress).